We begin with the raw amino-acid sequence, 147 residues long: UPF0275 protein PM0504 (147 aa).

Belongs to the UPF0275 family.

The polypeptide is UPF0275 protein PM0504 (Pasteurella multocida (strain Pm70)).